Here is a 423-residue protein sequence, read N- to C-terminus: SH2 domain-containing protein 5 (423 aa).

One can recognise a PID domain in the interval 28 to 146 (AQYVGLLPCG…LLCRSFQLAY (119 aa)). The region spanning 296-392 (WAFAGISRPC…LDMGRLNPTY (97 aa)) is the SH2 domain. The segment at 394 to 423 (EQDCGPLGRPPRTLRPLSHAKSEAELQGLG) is disordered. Low complexity predominate over residues 398 to 410 (GPLGRPPRTLRPL).

In terms of assembly, interacts with BCR.

It localises to the postsynaptic density. May be involved in synaptic plasticity regulation through the control of Rac-GTP levels. The chain is SH2 domain-containing protein 5 from Pongo abelii (Sumatran orangutan).